The chain runs to 264 residues: Glutamate racemase (264 aa).

Substrate is bound by residues 10 to 11 and 42 to 43; these read DS and YG. C73 serves as the catalytic Proton donor/acceptor. Residue 74 to 75 coordinates substrate; sequence NT. C183 acts as the Proton donor/acceptor in catalysis. A substrate-binding site is contributed by 184-185; the sequence is TH.

It belongs to the aspartate/glutamate racemases family.

The catalysed reaction is L-glutamate = D-glutamate. It functions in the pathway cell wall biogenesis; peptidoglycan biosynthesis. Its function is as follows. Provides the (R)-glutamate required for cell wall biosynthesis. The chain is Glutamate racemase from Streptococcus suis (strain 98HAH33).